Reading from the N-terminus, the 369-residue chain is Anthranilate phosphoribosyltransferase (369 aa).

Residues glycine 99, 102–103 (GD), 109–112 (NVST), 127–135 (KHGNRGVSS), and serine 139 contribute to the 5-phospho-alpha-D-ribose 1-diphosphate site. Glycine 99 is a binding site for anthranilate. Serine 111 is a binding site for Mg(2+). Residue asparagine 130 participates in anthranilate binding. Residue arginine 185 coordinates anthranilate. Aspartate 244 and glutamate 245 together coordinate Mg(2+).

The protein belongs to the anthranilate phosphoribosyltransferase family. In terms of assembly, homodimer. Mg(2+) is required as a cofactor.

The catalysed reaction is N-(5-phospho-beta-D-ribosyl)anthranilate + diphosphate = 5-phospho-alpha-D-ribose 1-diphosphate + anthranilate. The protein operates within amino-acid biosynthesis; L-tryptophan biosynthesis; L-tryptophan from chorismate: step 2/5. Its function is as follows. Catalyzes the transfer of the phosphoribosyl group of 5-phosphorylribose-1-pyrophosphate (PRPP) to anthranilate to yield N-(5'-phosphoribosyl)-anthranilate (PRA). This chain is Anthranilate phosphoribosyltransferase, found in Psychrobacter sp. (strain PRwf-1).